We begin with the raw amino-acid sequence, 355 residues long: F-box only protein 32 (355 aa).

The Nuclear localization signal motif lies at 62 to 67 (KKRKKD). The Nuclear export signal motif lies at 169-173 (LLQTL). The 49-residue stretch at 223-271 (LTITDLPVCLQLNIMQRLSDGRDLVSLGQAAPDLHVLSEDRLLWKRLCQ) folds into the F-box domain. The Bipartite nuclear localization signal signature appears at 280–295 (RKRLILSDKGQLDWKK).

Part of the SCF (SKP1-CUL1-F-box) E3 ubiquitin-protein ligase complex SCF(FBXO32) formed of CUL1, SKP1, RBX1 and FBXO32. Specifically expressed in cardiac and skeletal muscle.

The protein resides in the cytoplasm. It is found in the nucleus. Its pathway is protein modification; protein ubiquitination. In terms of biological role, substrate recognition component of a SCF (SKP1-CUL1-F-box protein) E3 ubiquitin-protein ligase complex which mediates the ubiquitination and subsequent proteasomal degradation of target proteins. Probably recognizes and binds to phosphorylated target proteins during skeletal muscle atrophy. Recognizes TERF1. In Mus musculus (Mouse), this protein is F-box only protein 32 (Fbxo32).